Consider the following 263-residue polypeptide: Rano class II histocompatibility antigen, B-1 beta chain (263 aa).

The signal sequence occupies residues 1-27 (MALQTPSFLLPAAVVVLMVLSSPGTEG). The interval 28–120 (RDSPRDFVYQ…SEVRTSLRRL (93 aa)) is beta-1. Topologically, residues 28–224 (RDSPRDFVYQ…RAQSESAQSK (197 aa)) are extracellular. 2 cysteine pairs are disulfide-bonded: cysteine 42/cysteine 104 and cysteine 143/cysteine 199. An N-linked (GlcNAc...) asparagine glycan is attached at asparagine 46. The tract at residues 121–214 (EQPNVAISLS…SLESPVTVEW (94 aa)) is beta-2. An Ig-like C1-type domain is found at 123 to 211 (PNVAISLSRT…DHPSLESPVT (89 aa)). The tract at residues 215-224 (RAQSESAQSK) is connecting peptide. The helical transmembrane segment at 225–245 (MLSGIGGFVLGVIFLGLGLFI) threads the bilayer. Topologically, residues 246-263 (RHKRQKGPRGPPPAGLLQ) are cytoplasmic. A Glycyl lysine isopeptide (Lys-Gly) (interchain with G-Cter in ubiquitin) cross-link involves residue lysine 251.

The protein belongs to the MHC class II family.

Its subcellular location is the membrane. Its function is as follows. Involved in the presentation of foreign antigens to the immune system. In Rattus norvegicus (Rat), this protein is Rano class II histocompatibility antigen, B-1 beta chain (RT1-Bb).